The chain runs to 117 residues: uncharacterized protein (117 aa).

This is an uncharacterized protein from Methanocaldococcus jannaschii (strain ATCC 43067 / DSM 2661 / JAL-1 / JCM 10045 / NBRC 100440) (Methanococcus jannaschii).